The primary structure comprises 70 residues: Cold shock-like protein CspH (70 aa).

One can recognise a CSD domain in the interval Gly7–Val67.

It localises to the cytoplasm. This is Cold shock-like protein CspH (cspH) from Salmonella typhi.